Consider the following 185-residue polypeptide: Small ribosomal subunit protein uS4c (185 aa).

In terms of domain architecture, S4 RNA-binding spans 72–134; sequence MRLDNVIFRL…PTSCNALKGE (63 aa). The interval 132 to 154 is disordered; the sequence is KGESPGGGETPDHLTASLSEGSR.

This sequence belongs to the universal ribosomal protein uS4 family. In terms of assembly, part of the 30S ribosomal subunit. Contacts protein S5. The interaction surface between S4 and S5 is involved in control of translational fidelity.

The protein resides in the plastid. It localises to the chloroplast. Its function is as follows. One of the primary rRNA binding proteins, it binds directly to 16S rRNA where it nucleates assembly of the body of the 30S subunit. In terms of biological role, with S5 and S12 plays an important role in translational accuracy. In Woodwardia radicans (Rooting chainfern), this protein is Small ribosomal subunit protein uS4c (rps4).